Consider the following 811-residue polypeptide: Vacuolar protein sorting-associated protein 70 (811 aa).

A compositionally biased stretch (basic and acidic residues) spans Met1 to Thr21. The disordered stretch occupies residues Met1–Arg63. Asn55 carries an N-linked (GlcNAc...) asparagine glycan. The helical transmembrane segment at Phe90–Pro110 threads the bilayer. Asn237 is a glycosylation site (N-linked (GlcNAc...) asparagine). Residues Phe334–Ser367 form a disordered region. A compositionally biased stretch (low complexity) spans Asp336 to Gly345. The Zn(2+) site is built by His445, Asp456, and Asp522. 2 N-linked (GlcNAc...) asparagine glycosylation sites follow: Asn568 and Asn599. His607 is a Zn(2+) binding site. Asn670 carries an N-linked (GlcNAc...) asparagine glycan.

This sequence belongs to the peptidase M28 family. M28B subfamily. The cofactor is Zn(2+).

It is found in the membrane. Its function is as follows. Involved in vacuolar protein sorting. The sequence is that of Vacuolar protein sorting-associated protein 70 (VPS70) from Saccharomyces cerevisiae (strain ATCC 204508 / S288c) (Baker's yeast).